We begin with the raw amino-acid sequence, 379 residues long: Probable tRNA sulfurtransferase (379 aa).

A THUMP domain is found at 52-157 (DEFLDKLKFI…RHHAFVFCKI (106 aa)). Residues 175–176 (LL), arginine 257, glycine 279, and glutamine 288 each bind ATP.

This sequence belongs to the ThiI family.

The protein localises to the cytoplasm. It catalyses the reaction [ThiI sulfur-carrier protein]-S-sulfanyl-L-cysteine + a uridine in tRNA + 2 reduced [2Fe-2S]-[ferredoxin] + ATP + H(+) = [ThiI sulfur-carrier protein]-L-cysteine + a 4-thiouridine in tRNA + 2 oxidized [2Fe-2S]-[ferredoxin] + AMP + diphosphate. It carries out the reaction [ThiS sulfur-carrier protein]-C-terminal Gly-Gly-AMP + S-sulfanyl-L-cysteinyl-[cysteine desulfurase] + AH2 = [ThiS sulfur-carrier protein]-C-terminal-Gly-aminoethanethioate + L-cysteinyl-[cysteine desulfurase] + A + AMP + 2 H(+). Its pathway is cofactor biosynthesis; thiamine diphosphate biosynthesis. Its function is as follows. Catalyzes the ATP-dependent transfer of a sulfur to tRNA to produce 4-thiouridine in position 8 of tRNAs, which functions as a near-UV photosensor. Also catalyzes the transfer of sulfur to the sulfur carrier protein ThiS, forming ThiS-thiocarboxylate. This is a step in the synthesis of thiazole, in the thiamine biosynthesis pathway. The sulfur is donated as persulfide by IscS. This chain is Probable tRNA sulfurtransferase, found in Mycoplasmopsis pulmonis (strain UAB CTIP) (Mycoplasma pulmonis).